The primary structure comprises 42 residues: uncharacterized protein (42 aa).

Residues 18–38 (VGAISLTVMMILFFIAIVWFL) form a helical membrane-spanning segment.

It localises to the host membrane. This is an uncharacterized protein from His1 virus (isolate Australia/Victoria) (His1V).